The sequence spans 262 residues: MIHETAQIHPTSVVEEGAIIGANVKIGPFCFVDSKVEIGEGTELLSHVVVKGPTKIGRFNRIFQFASIGEACQDLKYAGEDTQLIIGDRNTIRESVTMHRGTVQDKGITIVGSDNLFMINAHVAHDCVIGDRCIFANNATLAGHVKVGNQAIVGGMSAIHQFCHIGDHCMLGGGSIVVQDVPPYVMAQGNHCAPFGINVEGLKRRGFDKAEIHAIRRAYKSLYRNGLTLEAAKAEIAQEAEQYPSVKLFLDFLEKSERGIIR.

Belongs to the transferase hexapeptide repeat family. LpxA subfamily. In terms of assembly, homotrimer.

It localises to the cytoplasm. The catalysed reaction is a (3R)-hydroxyacyl-[ACP] + UDP-N-acetyl-alpha-D-glucosamine = a UDP-3-O-[(3R)-3-hydroxyacyl]-N-acetyl-alpha-D-glucosamine + holo-[ACP]. The protein operates within glycolipid biosynthesis; lipid IV(A) biosynthesis; lipid IV(A) from (3R)-3-hydroxytetradecanoyl-[acyl-carrier-protein] and UDP-N-acetyl-alpha-D-glucosamine: step 1/6. In terms of biological role, involved in the biosynthesis of lipid A, a phosphorylated glycolipid that anchors the lipopolysaccharide to the outer membrane of the cell. This Vibrio cholerae serotype O1 (strain ATCC 39541 / Classical Ogawa 395 / O395) protein is Acyl-[acyl-carrier-protein]--UDP-N-acetylglucosamine O-acyltransferase.